The primary structure comprises 485 residues: Glycogen synthase (485 aa).

Lysine 18 serves as a coordination point for ADP-alpha-D-glucose.

Belongs to the glycosyltransferase 1 family. Bacterial/plant glycogen synthase subfamily.

The enzyme catalyses [(1-&gt;4)-alpha-D-glucosyl](n) + ADP-alpha-D-glucose = [(1-&gt;4)-alpha-D-glucosyl](n+1) + ADP + H(+). The protein operates within glycan biosynthesis; glycogen biosynthesis. Synthesizes alpha-1,4-glucan chains using ADP-glucose. This Dechloromonas aromatica (strain RCB) protein is Glycogen synthase.